The sequence spans 445 residues: 6-phosphogluconate dehydrogenase, decarboxylating (445 aa).

Residues 1–4, 22–24, 63–65, and Asn-91 each bind NADP(+); these read AVMG, NRS, and VKA. Substrate is bound by residues Asn-91 and 117–119; that span reads SGG. Lys-172 functions as the Proton acceptor in the catalytic mechanism. 175–176 provides a ligand contact to substrate; that stretch reads HN. Glu-179 (proton donor) is an active-site residue. 5 residues coordinate substrate: Tyr-180, Lys-249, Arg-276, Arg-434, and His-440.

It belongs to the 6-phosphogluconate dehydrogenase family. In terms of assembly, homodimer.

The catalysed reaction is 6-phospho-D-gluconate + NADP(+) = D-ribulose 5-phosphate + CO2 + NADPH. Its pathway is carbohydrate degradation; pentose phosphate pathway; D-ribulose 5-phosphate from D-glucose 6-phosphate (oxidative stage): step 3/3. Its function is as follows. Catalyzes the oxidative decarboxylation of 6-phosphogluconate to ribulose 5-phosphate and CO(2), with concomitant reduction of NADP to NADPH. The polypeptide is 6-phosphogluconate dehydrogenase, decarboxylating (gnd) (Shigella boydii).